We begin with the raw amino-acid sequence, 172 residues long: MDKVLNREESMELMDLLGLERAAWGNLPLMRKAYLRKCKEFHPDKGGDEDKMKRMNTLYKKMEQDVKVAHQPDFGTWSSSEVCADFPLCPDTLYCKEWPICSKKPSVHCPCMLCQLRLRHLNRKFLRKEPLVWIDCYCIDCFTQWFGLDLTEETLQWWVQIIGETPFRDLKL.

N-acetylmethionine; by host is present on Met1. In terms of domain architecture, J spans Glu12–Gly75. The C4-type; atypical zinc finger occupies Cys101–Cys114. The H1C3-type; atypical zinc finger occupies His120–Cys141.

In terms of assembly, interacts with host PPP2R1A; the interaction inhibits PP2A activity.

It localises to the host cytoplasm. The protein localises to the host nucleus. In terms of biological role, promotes efficient viral genome replication by accelerating both G1 and S phase progression of the cell cycle. Inhibits host PP2A by binding to the A subunit, thereby displacing lower affinity regulatory B subunit. Inactivation of PP2A in turn results in the transactivation of cyclin A and cyclin D1 promoters. Late during the infection cycle, ST may induce dephosphorylation of host MTOR, leading to the inhibition of cap-dependent translation. May establish and maintain high levels of viral genomes during persistent infection in cell culture. This chain is Small t antigen, found in Homo sapiens (Human).